Here is a 54-residue protein sequence, read N- to C-terminus: Protein YojO (54 aa).

This sequence belongs to the YojO family.

In Escherichia coli (strain K12), this protein is Protein YojO (yojO).